The sequence spans 1113 residues: StAR-related lipid transfer protein 13 (1113 aa).

Residue Met-1 is modified to N-acetylmethionine. An SAM domain is found at 55–122; that stretch reads QQEIEAKEAC…LNKCASMRLD (68 aa). Disordered stretches follow at residues 164-218, 230-256, and 308-343; these read PVAD…HSAD, SSLPQSTREGLNQSFHPKNEKPTRTRA, and NGDLQTSPPAACRKGLPCSSKSSGESSPLENSSTVS. Residues 179–188 are compositionally biased toward polar residues; the sequence is NTASSESVLT. The span at 197 to 214 shows a compositional bias: low complexity; the sequence is SIHSESSGGSDSRSQSGH. The span at 230–245 shows a compositional bias: polar residues; sequence SSLPQSTREGLNQSFH. Low complexity predominate over residues 322–340; it reads GLPCSSKSSGESSPLENSS. Phosphoserine is present on Ser-411. Polar residues-rich tracts occupy residues 421 to 435 and 529 to 549; these read SNGVNWRTGSISLGR and PNQVTLDFEGNSVSEGRTTPS. 2 disordered regions span residues 421 to 443 and 514 to 578; these read SNGVNWRTGSISLGRQQGPGMRE and HSTL…GASL. Residues 663-868 enclose the Rho-GAP domain; the sequence is VPLIVHVQRT…HMITECNRLF (206 aa). Residues 899-1109 form the START domain; that stretch reads LAESGATFHT…SFQPLVAEGP (211 aa).

As to quaternary structure, homodimer. Interacts with TAX1BP1.

Its subcellular location is the cytoplasm. The protein localises to the membrane. The protein resides in the mitochondrion membrane. It localises to the lipid droplet. Functionally, may function as a GTPase-activating protein. The sequence is that of StAR-related lipid transfer protein 13 (Stard13) from Mus musculus (Mouse).